The primary structure comprises 435 residues: 3-ketoacyl-CoA thiolase (435 aa).

The active-site Acyl-thioester intermediate is Cys98. Catalysis depends on proton acceptor residues His391 and Cys421.

This sequence belongs to the thiolase-like superfamily. Thiolase family. In terms of assembly, heterotetramer of two alpha chains (FadJ) and two beta chains (FadI).

Its subcellular location is the cytoplasm. The enzyme catalyses an acyl-CoA + acetyl-CoA = a 3-oxoacyl-CoA + CoA. It functions in the pathway lipid metabolism; fatty acid beta-oxidation. Its function is as follows. Catalyzes the final step of fatty acid oxidation in which acetyl-CoA is released and the CoA ester of a fatty acid two carbons shorter is formed. This Vibrio vulnificus (strain CMCP6) protein is 3-ketoacyl-CoA thiolase.